Consider the following 472-residue polypeptide: N-succinylglutamate 5-semialdehyde dehydrogenase 1 (472 aa).

Residue 209–214 (GGVQAG) coordinates NAD(+). Active-site residues include E232 and C266.

Belongs to the aldehyde dehydrogenase family. AstD subfamily.

It carries out the reaction N-succinyl-L-glutamate 5-semialdehyde + NAD(+) + H2O = N-succinyl-L-glutamate + NADH + 2 H(+). The protein operates within amino-acid degradation; L-arginine degradation via AST pathway; L-glutamate and succinate from L-arginine: step 4/5. In terms of biological role, catalyzes the NAD-dependent reduction of succinylglutamate semialdehyde into succinylglutamate. The chain is N-succinylglutamate 5-semialdehyde dehydrogenase 1 from Caulobacter vibrioides (strain ATCC 19089 / CIP 103742 / CB 15) (Caulobacter crescentus).